We begin with the raw amino-acid sequence, 774 residues long: E3 ubiquitin-protein ligase RFWD3 (774 aa).

Disordered stretches follow at residues 32 to 126 and 203 to 281; these read GTIE…TAGA and PYPL…SAME. Residues S59 and S75 each carry the phosphoserine; by ATM and ATR modification. Positions 92 to 103 are enriched in acidic residues; the sequence is LTEEVQPSEENM. Residues 108–121 are compositionally biased toward polar residues; the sequence is PGTSEEPSQGSGAN. The span at 223–242 shows a compositional bias: acidic residues; it reads SDSDGSAEDEEVVVQAEEPE. The segment at 288 to 332 adopts an RING-type; degenerate zinc-finger fold; the sequence is CTICLEQWTNAGDHRISALRCGHLFGFRCISKWLKGQTRKCPQCN. Residues 358-403 are a coiled coil; it reads RMKSDLLNEQMLRKQAELESAQCRLQLQVLIDKCTKLNSRVQDLEK. WD repeat units lie at residues 493 to 535, 536 to 568, and 583 to 628; these read IPMH…VVQT, YNTG…LIYD, and KARC…SHKP.

In terms of assembly, interacts with MDM2 and p53/TP53. Binds to the RPA complex via direct interaction with RPA2. Interacts with RAD51. Phosphorylated at Ser-59 and Ser-75 upon DNA damage by ATM or ATR. ATM phosphorylation occurs at early times upon DNA damage, while ATR is the major kinase at later times. Phosphorylation by ATM and ATR is required to stabilize p53/TP53. Part of the phosphorylation depends upon RPA2 presence.

It is found in the nucleus. It localises to the PML body. The protein resides in the cytoplasm. It catalyses the reaction S-ubiquitinyl-[E2 ubiquitin-conjugating enzyme]-L-cysteine + [acceptor protein]-L-lysine = [E2 ubiquitin-conjugating enzyme]-L-cysteine + N(6)-ubiquitinyl-[acceptor protein]-L-lysine.. It functions in the pathway protein modification; protein ubiquitination. Its function is as follows. E3 ubiquitin-protein ligase required for the repair of DNA interstrand cross-links (ICL) in response to DNA damage. Plays a key role in RPA-mediated DNA damage signaling and repair. Acts by mediating ubiquitination of the RPA complex (RPA1, RPA2 and RPA3 subunits) and RAD51 at stalled replication forks, leading to remove them from DNA damage sites and promote homologous recombination. Also mediates the ubiquitination of p53/TP53 in the late response to DNA damage, and acts as a positive regulator of p53/TP53 stability, thereby regulating the G1/S DNA damage checkpoint. May act by catalyzing the formation of short polyubiquitin chains on p53/TP53 that are not targeted to the proteasome. In response to ionizing radiation, interacts with MDM2 and enhances p53/TP53 ubiquitination, possibly by restricting MDM2 from extending polyubiquitin chains on ubiquitinated p53/TP53. Required to translesion DNA synthesis across DNA-protein cross-link adducts by catalyzing ubiquitination of proteins on single-stranded DNA (ssDNA). The chain is E3 ubiquitin-protein ligase RFWD3 (Rfwd3) from Mus musculus (Mouse).